Here is a 275-residue protein sequence, read N- to C-terminus: MTQYSHVKYTQSPTPSVVSGYSSASRLHSPLPPPANHRRDCLSATTKSYKYLRRLLKFNQMDFEFALWQMLYLFVAPQKVYRNFNYRKQTKSQFARDDPAFLVLLVVCLCVTSLGFAYVLGLSFWQSISFIFYVVFVDCIFVGIIIASFFWAVTNRYLRTNSLEPDIEWGYAFDVHLNAFFPPLMLLHFIQLFFYNWLISQTWFISRFLGNTFWLMGMGYYVYITFLGYNCIPHLKNTRIILIALPIIFLLFLVVTIIGWNATISFVNFYKYRVY.

Residues 1 to 26 show a composition bias toward polar residues; it reads MTQYSHVKYTQSPTPSVVSGYSSASR. The tract at residues 1–39 is disordered; it reads MTQYSHVKYTQSPTPSVVSGYSSASRLHSPLPPPANHRR. Residues 1–99 lie on the Cytoplasmic side of the membrane; the sequence is MTQYSHVKYT…TKSQFARDDP (99 aa). The chain crosses the membrane as a helical span at residues 100-120; sequence AFLVLLVVCLCVTSLGFAYVL. The Lumenal segment spans residues 121–129; it reads GLSFWQSIS. A helical membrane pass occupies residues 130–150; the sequence is FIFYVVFVDCIFVGIIIASFF. At 151-178 the chain is on the cytoplasmic side; it reads WAVTNRYLRTNSLEPDIEWGYAFDVHLN. A helical membrane pass occupies residues 179–199; sequence AFFPPLMLLHFIQLFFYNWLI. The Lumenal portion of the chain corresponds to 200-207; that stretch reads SQTWFISR. Residues 208–228 form a helical membrane-spanning segment; the sequence is FLGNTFWLMGMGYYVYITFLG. Residues 229-239 are Cytoplasmic-facing; it reads YNCIPHLKNTR. A helical transmembrane segment spans residues 240 to 260; that stretch reads IILIALPIIFLLFLVVTIIGW. Over 261 to 275 the chain is Lumenal; that stretch reads NATISFVNFYKYRVY.

It belongs to the unc-50 family.

It localises to the golgi apparatus membrane. Required for cell surface expression of acetylcholine receptors. In Drosophila melanogaster (Fruit fly), this protein is Protein unc-50 homolog.